Consider the following 357-residue polypeptide: D-alanine--D-alanine ligase A (357 aa).

An ATP-grasp domain is found at 143–348; that stretch reads KRLLREAGLA…YSKVIDVLIE (206 aa). 171–226 contacts ATP; that stretch reads AGALGLPFFAKPARQGSSFGVSKVHDRDGFEQAVETALRYDSKALIEEFVDGREIE. Residues aspartate 302, glutamate 315, and asparagine 317 each coordinate Mg(2+).

The protein belongs to the D-alanine--D-alanine ligase family. The cofactor is Mg(2+). It depends on Mn(2+) as a cofactor.

The protein localises to the cytoplasm. The enzyme catalyses 2 D-alanine + ATP = D-alanyl-D-alanine + ADP + phosphate + H(+). It participates in cell wall biogenesis; peptidoglycan biosynthesis. Cell wall formation. The polypeptide is D-alanine--D-alanine ligase A (Mesorhizobium japonicum (strain LMG 29417 / CECT 9101 / MAFF 303099) (Mesorhizobium loti (strain MAFF 303099))).